We begin with the raw amino-acid sequence, 632 residues long: tRNA uridine 5-carboxymethylaminomethyl modification enzyme MnmG (632 aa).

13–18 (GGGHAG) serves as a coordination point for FAD. 274-288 (GPRYCPSIEDKVMRF) contacts NAD(+).

Belongs to the MnmG family. Homodimer. Heterotetramer of two MnmE and two MnmG subunits. The cofactor is FAD.

Its subcellular location is the cytoplasm. Functionally, NAD-binding protein involved in the addition of a carboxymethylaminomethyl (cmnm) group at the wobble position (U34) of certain tRNAs, forming tRNA-cmnm(5)s(2)U34. This chain is tRNA uridine 5-carboxymethylaminomethyl modification enzyme MnmG, found in Dichelobacter nodosus (strain VCS1703A).